A 469-amino-acid chain; its full sequence is 3-isopropylmalate dehydratase large subunit (469 aa).

Positions 347, 407, and 410 each coordinate [4Fe-4S] cluster.

It belongs to the aconitase/IPM isomerase family. LeuC type 1 subfamily. As to quaternary structure, heterodimer of LeuC and LeuD. The cofactor is [4Fe-4S] cluster.

It catalyses the reaction (2R,3S)-3-isopropylmalate = (2S)-2-isopropylmalate. It functions in the pathway amino-acid biosynthesis; L-leucine biosynthesis; L-leucine from 3-methyl-2-oxobutanoate: step 2/4. Its function is as follows. Catalyzes the isomerization between 2-isopropylmalate and 3-isopropylmalate, via the formation of 2-isopropylmaleate. This is 3-isopropylmalate dehydratase large subunit from Sorangium cellulosum (strain So ce56) (Polyangium cellulosum (strain So ce56)).